Reading from the N-terminus, the 405-residue chain is 8-amino-7-oxononanoate synthase 1 (405 aa).

Arginine 29 contacts substrate. 116–117 (GY) contacts pyridoxal 5'-phosphate. Histidine 141 serves as a coordination point for substrate. 3 residues coordinate pyridoxal 5'-phosphate: serine 187, histidine 215, and threonine 247. Lysine 250 is subject to N6-(pyridoxal phosphate)lysine. Threonine 368 contacts substrate.

The protein belongs to the class-II pyridoxal-phosphate-dependent aminotransferase family. BioF subfamily. In terms of assembly, homodimer. The cofactor is pyridoxal 5'-phosphate.

It carries out the reaction 6-carboxyhexanoyl-[ACP] + L-alanine + H(+) = (8S)-8-amino-7-oxononanoate + holo-[ACP] + CO2. It participates in cofactor biosynthesis; biotin biosynthesis. Catalyzes the decarboxylative condensation of pimeloyl-[acyl-carrier protein] and L-alanine to produce 8-amino-7-oxononanoate (AON), [acyl-carrier protein], and carbon dioxide. This is 8-amino-7-oxononanoate synthase 1 from Polaromonas sp. (strain JS666 / ATCC BAA-500).